The primary structure comprises 591 residues: Aspartate--tRNA ligase (591 aa).

Glu-173 contacts L-aspartate. An aspartate region spans residues 197 to 200; that stretch reads QLFK. Arg-219 serves as a coordination point for L-aspartate. Residues 219–221 and Gln-228 contribute to the ATP site; that span reads RDE. His-448 serves as a coordination point for L-aspartate. Position 482 (Glu-482) interacts with ATP. Arg-489 contributes to the L-aspartate binding site. 534-537 is a binding site for ATP; the sequence is GLDR.

This sequence belongs to the class-II aminoacyl-tRNA synthetase family. Type 1 subfamily. Homodimer.

Its subcellular location is the cytoplasm. The catalysed reaction is tRNA(Asp) + L-aspartate + ATP = L-aspartyl-tRNA(Asp) + AMP + diphosphate. In terms of biological role, catalyzes the attachment of L-aspartate to tRNA(Asp) in a two-step reaction: L-aspartate is first activated by ATP to form Asp-AMP and then transferred to the acceptor end of tRNA(Asp). This is Aspartate--tRNA ligase from Shewanella frigidimarina (strain NCIMB 400).